Here is a 390-residue protein sequence, read N- to C-terminus: tRNA(Met) cytidine acetate ligase (390 aa).

Residues 7-20, Gly-101, Asn-162, and Arg-187 each bind ATP; that span reads VVEY…HKLH.

Belongs to the TmcAL family.

The protein localises to the cytoplasm. The catalysed reaction is cytidine(34) in elongator tRNA(Met) + acetate + ATP = N(4)-acetylcytidine(34) in elongator tRNA(Met) + AMP + diphosphate. In terms of biological role, catalyzes the formation of N(4)-acetylcytidine (ac(4)C) at the wobble position of elongator tRNA(Met), using acetate and ATP as substrates. First activates an acetate ion to form acetyladenylate (Ac-AMP) and then transfers the acetyl group to tRNA to form ac(4)C34. The sequence is that of tRNA(Met) cytidine acetate ligase from Listeria monocytogenes serovar 1/2a (strain ATCC BAA-679 / EGD-e).